Consider the following 432-residue polypeptide: NADH-quinone oxidoreductase subunit D (432 aa).

It belongs to the complex I 49 kDa subunit family. NDH-1 is composed of 14 different subunits. Subunits NuoB, C, D, E, F, and G constitute the peripheral sector of the complex.

Its subcellular location is the cell membrane. It carries out the reaction a quinone + NADH + 5 H(+)(in) = a quinol + NAD(+) + 4 H(+)(out). NDH-1 shuttles electrons from NADH, via FMN and iron-sulfur (Fe-S) centers, to quinones in the respiratory chain. The immediate electron acceptor for the enzyme in this species is believed to be a menaquinone. Couples the redox reaction to proton translocation (for every two electrons transferred, four hydrogen ions are translocated across the cytoplasmic membrane), and thus conserves the redox energy in a proton gradient. The polypeptide is NADH-quinone oxidoreductase subunit D (Mycobacteroides abscessus (strain ATCC 19977 / DSM 44196 / CCUG 20993 / CIP 104536 / JCM 13569 / NCTC 13031 / TMC 1543 / L948) (Mycobacterium abscessus)).